The primary structure comprises 117 residues: Protein Aeq5-like2 (117 aa).

The Cytoplasmic portion of the chain corresponds to 1–36; it reads MLVNARAIRQSIGIVVAQCRRDLESNRTLDYRTRMR. A helical transmembrane segment spans residues 37–56; it reads TSLILVAMVMVSVLLPYTYG. Residues 57 to 117 lie on the Extracellular side of the membrane; that stretch reads SSCDSFCTEQ…RFTKEPTEES (61 aa). 4 disulfide bridges follow: Cys59/Cys94, Cys63/Cys90, Cys70/Cys83, and Cys74/Cys80.

In terms of processing, the mature peptide may be cleaved at a dibasic residue site and be shorter than the sequence shown (possibly residues 1-94). In terms of tissue distribution, expressed in endodermal ganglion neurons, apparently bipolar and following mesentery folds (observed in both planulae and primary polyps). It not expressed in nematocytes.

Its subcellular location is the membrane. This Nematostella vectensis (Starlet sea anemone) protein is Protein Aeq5-like2.